Reading from the N-terminus, the 146-residue chain is MRRNDGERHCVQWSRGARKFFGKNPEIIDIPDLIEVQKASYDQFLMMNTAPEDRPNEGLQAAFKSVFPIKAFSGAAMLEFVSYEFDPPKFDVDDCLRRDLTYAVPLKIILRLIVFDVDEFTGAKSIKDIKEQSIYMGDVPLMTKDG.

This sequence belongs to the RNA polymerase beta chain family. In terms of assembly, the RNAP catalytic core consists of 2 alpha, 1 beta, 1 beta' and 1 omega subunit. When a sigma factor is associated with the core the holoenzyme is formed, which can initiate transcription.

It carries out the reaction RNA(n) + a ribonucleoside 5'-triphosphate = RNA(n+1) + diphosphate. In terms of biological role, DNA-dependent RNA polymerase catalyzes the transcription of DNA into RNA using the four ribonucleoside triphosphates as substrates. This chain is DNA-directed RNA polymerase subunit beta (rpoB), found in Liberibacter africanus (Citrus greening disease).